The sequence spans 552 residues: Urocanate hydratase (552 aa).

NAD(+) contacts are provided by residues 49 to 50, Q127, 173 to 175, D193, 239 to 240, 260 to 264, 270 to 271, and Y319; these read GG, GMG, NA, QTSAH, and YI. C407 is an active-site residue. G489 contacts NAD(+).

It belongs to the urocanase family. NAD(+) serves as cofactor.

The protein localises to the cytoplasm. The enzyme catalyses 4-imidazolone-5-propanoate = trans-urocanate + H2O. The protein operates within amino-acid degradation; L-histidine degradation into L-glutamate; N-formimidoyl-L-glutamate from L-histidine: step 2/3. In terms of biological role, catalyzes the conversion of urocanate to 4-imidazolone-5-propionate. The polypeptide is Urocanate hydratase (Bacillus anthracis (strain CDC 684 / NRRL 3495)).